The primary structure comprises 156 residues: MPKVAVGGTFQYLHDGHARLIEKAFEIAGDGKVYIGLTSDEMLQKNHSIDNYENRRVRLLEYIDEMEIPKEKYEITRLNDPCGPTVEEDFDYIVVSPETYPVALKINRIREKKGKNPLEIVYVEYVMAEDGTPISSTRIAKGEIDRHGKMKRESQA.

Belongs to the eukaryotic CoaD family.

The protein localises to the cytoplasm. The enzyme catalyses (R)-4'-phosphopantetheine + ATP + H(+) = 3'-dephospho-CoA + diphosphate. Its pathway is cofactor biosynthesis; coenzyme A biosynthesis. Functionally, reversibly transfers an adenylyl group from ATP to 4'-phosphopantetheine, yielding dephospho-CoA (dPCoA) and pyrophosphate. The protein is Phosphopantetheine adenylyltransferase of Methanosarcina acetivorans (strain ATCC 35395 / DSM 2834 / JCM 12185 / C2A).